The following is a 930-amino-acid chain: Polypeptide N-acetylgalactosaminyltransferase 5 (930 aa).

The Cytoplasmic segment spans residues 1–12; the sequence is MNKIRKFFRGSG. A helical; Signal-anchor for type II membrane protein membrane pass occupies residues 13–35; the sequence is RVLAFIFAASVIWLLFDMAALRL. Over 36–930 the chain is Lumenal; sequence SFSEINAGLL…KWKFEKYYEV (895 aa). Residues 190–209 form a disordered region; that stretch reads KQEAPQNYNVSSDTSKQASE. Over residues 193–209 the composition is skewed to polar residues; that stretch reads APQNYNVSSDTSKQASE. N-linked (GlcNAc...) asparagine glycosylation is found at asparagine 198, asparagine 213, and asparagine 283. A Phosphoserine modification is found at serine 285. 4 N-linked (GlcNAc...) asparagine glycosylation sites follow: asparagine 287, asparagine 309, asparagine 355, and asparagine 387. Positions 327–381 are disordered; the sequence is DTKEVPNSKTQTVFPKLLGGSPHKQIPRNQSKTSSSPPALKKAVSQSKPTISGGL. Over residues 353-363 the composition is skewed to polar residues; sequence PRNQSKTSSSP. 3 disulfides stabilise this stretch: cysteine 476–cysteine 708, cysteine 699–cysteine 779, and cysteine 812–cysteine 825. Residues 485–594 are catalytic subdomain A; the sequence is LPTTSIIMCF…VGWLEPLLER (110 aa). Positions 526 and 555 each coordinate substrate. The N-linked (GlcNAc...) asparagine glycan is linked to asparagine 568. A Mn(2+)-binding site is contributed by aspartate 578. Serine 579 lines the substrate pocket. Histidine 580 lines the Mn(2+) pocket. Residues 654-716 form a catalytic subdomain B region; it reads IIRCPVMAGG…PCSRVGHIFR (63 aa). A substrate-binding site is contributed by tryptophan 685. Histidine 713 lines the Mn(2+) pocket. 2 residues coordinate substrate: arginine 716 and tyrosine 721. N-linked (GlcNAc...) asparagine glycans are attached at residues asparagine 766, asparagine 817, and asparagine 835. Positions 794–925 constitute a Ricin B-type lectin domain; sequence KAPVVRASGV…MELQQKWKFE (132 aa). 2 disulfide bridges follow: cysteine 848–cysteine 863 and cysteine 898–cysteine 913. N-linked (GlcNAc...) asparagine glycosylation occurs at asparagine 902.

This sequence belongs to the glycosyltransferase 2 family. GalNAc-T subfamily. As to quaternary structure, interacts with EXT2. Does not interact with EXT1, EXTL1 or EXTL3. Mn(2+) serves as cofactor. Expressed at low level. Not expressed before E7.5 during embryogenesis. Expressed in dental mesenchyme and tongue. Accumulates in a subset of mesenchymal cells at the ventral-most portions of the 12.5 dpc maxilla and mandible underlying the dental lamina.

The protein localises to the golgi apparatus membrane. It carries out the reaction L-seryl-[protein] + UDP-N-acetyl-alpha-D-galactosamine = a 3-O-[N-acetyl-alpha-D-galactosaminyl]-L-seryl-[protein] + UDP + H(+). The enzyme catalyses L-threonyl-[protein] + UDP-N-acetyl-alpha-D-galactosamine = a 3-O-[N-acetyl-alpha-D-galactosaminyl]-L-threonyl-[protein] + UDP + H(+). It functions in the pathway protein modification; protein glycosylation. In terms of biological role, catalyzes the initial reaction in O-linked oligosaccharide biosynthesis, the transfer of an N-acetyl-D-galactosamine residue to a serine or threonine residue on the protein receptor. Has activity toward EA2 peptide substrate, but has a weak activity toward Muc2 or Muc1b substrates. The polypeptide is Polypeptide N-acetylgalactosaminyltransferase 5 (Galnt5) (Mus musculus (Mouse)).